A 342-amino-acid polypeptide reads, in one-letter code: Heat-inducible transcription repressor HrcA (342 aa).

Belongs to the HrcA family.

Negative regulator of class I heat shock genes (grpE-dnaK-dnaJ and groELS operons). Prevents heat-shock induction of these operons. In Methylibium petroleiphilum (strain ATCC BAA-1232 / LMG 22953 / PM1), this protein is Heat-inducible transcription repressor HrcA.